The primary structure comprises 433 residues: 5-methylthioadenosine/S-adenosylhomocysteine deaminase (433 aa).

Residues H67 and H69 each coordinate Zn(2+). Substrate contacts are provided by E96, R148, R158, and H186. H213 provides a ligand contact to Zn(2+). The substrate site is built by E216 and D301. Residue D301 participates in Zn(2+) binding.

The protein belongs to the metallo-dependent hydrolases superfamily. MTA/SAH deaminase family. Zn(2+) is required as a cofactor.

It carries out the reaction S-adenosyl-L-homocysteine + H2O + H(+) = S-inosyl-L-homocysteine + NH4(+). The enzyme catalyses S-methyl-5'-thioadenosine + H2O + H(+) = S-methyl-5'-thioinosine + NH4(+). Catalyzes the deamination of 5-methylthioadenosine and S-adenosyl-L-homocysteine into 5-methylthioinosine and S-inosyl-L-homocysteine, respectively. Is also able to deaminate adenosine. This chain is 5-methylthioadenosine/S-adenosylhomocysteine deaminase, found in Pelotomaculum thermopropionicum (strain DSM 13744 / JCM 10971 / SI).